The chain runs to 514 residues: Transmembrane protein 117 (514 aa).

The Cytoplasmic portion of the chain corresponds to 1-15; that stretch reads MGKDFRYYFQHPWSR. The chain crosses the membrane as a helical span at residues 16-36; sequence MIVAYLVIFFNFLIFAEDPVS. Topologically, residues 37–65 are extracellular; it reads HSQTEANVIVVGNCFSFVTNKYPRGVGWR. A helical transmembrane segment spans residues 66–86; it reads ILKVLLWLLAILTGLIAGKFL. Over 87-110 the chain is Cytoplasmic; the sequence is FHQRLFGQLLRLKMFREDHGSWMT. Residues 111–131 traverse the membrane as a helical segment; that stretch reads MFFSTILFLFIFSHIYNTILL. The Extracellular segment spans residues 132–154; it reads MDGNMGAYIITDYMGIRNESFMK. The chain crosses the membrane as a helical span at residues 155–175; the sequence is LAAVGTWMGDFVTAWMVTDMM. Residues 176–198 are Cytoplasmic-facing; sequence LQDKPYPDWGKSARAFWKKGNVR. A helical membrane pass occupies residues 199-219; that stretch reads ITLFWTVLFTLTSVVVLVITT. The Extracellular portion of the chain corresponds to 220-239; it reads DWISWDKLNRGFLPSDEVSR. A helical membrane pass occupies residues 240 to 260; sequence AFLASFILVFDLLIVMQDWEF. The Cytoplasmic segment spans residues 261-295; that stretch reads PHFMGDVDVNLPGLHTPHMQFKIPFFQKIFKEEYR. The helical transmembrane segment at 296–316 threads the bilayer; that stretch reads IHITGKWFNYGIIFLVLILDL. The Extracellular segment spans residues 317–394; it reads NMWKNQIFYK…FIGASLDVKC (78 aa). N-linked (GlcNAc...) asparagine glycans are attached at residues Asn-353 and Asn-371. The helical transmembrane segment at 395-415 threads the bilayer; sequence LAFVPSLIAFVWFGFFIWFFG. Over 416–514 the chain is Cytoplasmic; that stretch reads RFLKNEPRME…PTTSKSTPTN (99 aa). 2 disordered regions span residues 429-459 and 486-514; these read KTYTRMKRKSPSEHSKDMGITRENTQASVED and ENLSSQLNESTSATEADQDPTTSKSTPTN. Positions 438–448 are enriched in basic and acidic residues; it reads SPSEHSKDMGI. A Phosphothreonine modification is found at Thr-453.

This sequence belongs to the TMEM117 family.

The protein resides in the cell membrane. Involved in endoplasmic reticulum (ER) stress-induced cell death pathway. The chain is Transmembrane protein 117 (TMEM117) from Homo sapiens (Human).